Reading from the N-terminus, the 233-residue chain is Adenylyl cyclase-associated protein 1 (233 aa).

Phosphotyrosine is present on Tyr14. Ser17 bears the Phosphoserine mark. Disordered regions lie at residues 43–71 and 91–129; these read VDKX…PSAL and DEKT…KPVT. Residues 53–64 are compositionally biased toward low complexity; that stretch reads LSGLPSGPSAGS. Lys101 is subject to N6-methyllysine. 4 positions are modified to phosphoserine: Ser104, Ser115, Ser122, and Ser124. A Glycyl lysine isopeptide (Lys-Gly) (interchain with G-Cter in SUMO1) cross-link involves residue Lys151. The C-CAP/cofactor C-like domain occupies 173–221; that stretch reads VPXISINKXDGRHIYLSKNSLDCEIVSAKSSEMNVLIPTEGGDFNEFPV.

Belongs to the CAP family. As to quaternary structure, homodimer. Binds actin monomers.

It localises to the cell membrane. Functionally, directly regulates filament dynamics and has been implicated in a number of complex developmental and morphological processes, including mRNA localization and the establishment of cell polarity. This Sus scrofa (Pig) protein is Adenylyl cyclase-associated protein 1 (CAP1).